Consider the following 438-residue polypeptide: Neutral metalloprotease ShpI (438 aa).

An N-terminal signal peptide occupies residues 1–26 (MINKKKLVTSLVTSSLLATFTLGSFA). A propeptide spanning residues 27–101 (DAHTYIINNE…KSENALSNSK (75 aa)) is cleaved from the precursor. Residue His242 coordinates Zn(2+). Residue Glu243 is part of the active site. Positions 246 and 269 each coordinate Zn(2+).

The protein belongs to the peptidase M30 family. Zn(2+) is required as a cofactor. Several different N-terminal ends may be produced, the favored N-terminus is position 102.

It is found in the secreted. Inhibited by metal- and zinc-specific inhibitors, such as EDTA and 1,10-phenanthroline in vitro. Is resistant to all inhibitors of serine, cysteine and aspartic proteases. Protease that has a low substrate specificity. Catalyzes the hydrolysis of glucagon, melittin and oxidized beta-insulin at various positions in vitro. Is not able to cleave elastin or the synthetic substrates FAGLA (a substrate for neutral proteinases) and FALGPA (a substrate for collagenase). The sequence is that of Neutral metalloprotease ShpI from Staphylococcus hyicus.